We begin with the raw amino-acid sequence, 206 residues long: uncharacterized protein (206 aa).

The Nudix hydrolase domain maps to 29–169 (YWHSTFHCWV…DGVFAEGFIV (141 aa)). A Nudix box motif is present at residues 69–90 (AGHIKSGESIEDGVRELKEELG). Residues E84 and E88 each coordinate Mg(2+).

Belongs to the Nudix hydrolase family. Mg(2+) is required as a cofactor.

This is an uncharacterized protein from Clostridium acetobutylicum (strain ATCC 824 / DSM 792 / JCM 1419 / IAM 19013 / LMG 5710 / NBRC 13948 / NRRL B-527 / VKM B-1787 / 2291 / W).